The chain runs to 41 residues: Photosystem II reaction center protein L (41 aa).

A helical membrane pass occupies residues 20–40 (LFLGLLLVFVLGILSPATSLT).

It belongs to the PsbL family. PSII is composed of 1 copy each of membrane proteins PsbA, PsbB, PsbC, PsbD, PsbE, PsbF, PsbH, PsbI, PsbJ, PsbK, PsbL, PsbM, PsbT, PsbX, PsbY, PsbZ, Psb30/Ycf12, peripheral proteins PsbO, CyanoQ (PsbQ), PsbU, PsbV and a large number of cofactors. It forms dimeric complexes.

The protein resides in the cellular thylakoid membrane. One of the components of the core complex of photosystem II (PSII). PSII is a light-driven water:plastoquinone oxidoreductase that uses light energy to abstract electrons from H(2)O, generating O(2) and a proton gradient subsequently used for ATP formation. It consists of a core antenna complex that captures photons, and an electron transfer chain that converts photonic excitation into a charge separation. This subunit is found at the monomer-monomer interface and is required for correct PSII assembly and/or dimerization. In Synechococcus sp. (strain ATCC 27144 / PCC 6301 / SAUG 1402/1) (Anacystis nidulans), this protein is Photosystem II reaction center protein L.